A 395-amino-acid polypeptide reads, in one-letter code: NAD(P)H-quinone oxidoreductase subunit H, chloroplastic (395 aa).

Belongs to the complex I 49 kDa subunit family. As to quaternary structure, NDH is composed of at least 16 different subunits, 5 of which are encoded in the nucleus.

The protein localises to the plastid. It localises to the chloroplast thylakoid membrane. The enzyme catalyses a plastoquinone + NADH + (n+1) H(+)(in) = a plastoquinol + NAD(+) + n H(+)(out). It catalyses the reaction a plastoquinone + NADPH + (n+1) H(+)(in) = a plastoquinol + NADP(+) + n H(+)(out). In terms of biological role, NDH shuttles electrons from NAD(P)H:plastoquinone, via FMN and iron-sulfur (Fe-S) centers, to quinones in the photosynthetic chain and possibly in a chloroplast respiratory chain. The immediate electron acceptor for the enzyme in this species is believed to be plastoquinone. Couples the redox reaction to proton translocation, and thus conserves the redox energy in a proton gradient. This Dioscorea elephantipes (Elephant's foot yam) protein is NAD(P)H-quinone oxidoreductase subunit H, chloroplastic.